Consider the following 297-residue polypeptide: ClpXP adapter protein SpxH (297 aa).

It belongs to the SpxH family. Interacts with Spx.

It is found in the cytoplasm. Adapter protein required for efficient degradation of Spx by ClpXP under non-stress conditions. Interaction with Spx stabilizes Spx and exposes the C-terminus of Spx for recognition and proteolysis by ClpXP. This Bacillus cereus (strain ZK / E33L) protein is ClpXP adapter protein SpxH.